Reading from the N-terminus, the 333-residue chain is Electron transfer flavoprotein subunit alpha, mitochondrial (333 aa).

The N-terminal 19 residues, Met1–Phe19, are a transit peptide targeting the mitochondrion. Positions Gln20–Leu204 are domain I. N6-acetyllysine; alternate is present on Lys59. N6-succinyllysine; alternate is present on Lys59. Residue Lys62 is modified to N6-acetyllysine. Lys69 carries the N6-acetyllysine; alternate modification. The residue at position 69 (Lys69) is an N6-succinyllysine; alternate. The residue at position 75 (Lys75) is an N6-acetyllysine. An N6-acetyllysine; alternate modification is found at Lys85. At Lys85 the chain carries N6-succinyllysine; alternate. Thr93 bears the Phosphothreonine mark. 2 positions are modified to N6-acetyllysine: Lys101 and Lys139. Residue Ser140 is modified to Phosphoserine. At Lys158 the chain carries N6-acetyllysine; alternate. Position 158 is an N6-succinyllysine; alternate (Lys158). Lys164 is modified (N6-acetyllysine). Lys187 carries the post-translational modification N6-succinyllysine. Lys203 carries the N6-acetyllysine; alternate modification. An N6-succinyllysine; alternate modification is found at Lys203. The tract at residues Thr205–Lys333 is domain II. The residue at position 216 (Lys216) is an N6-succinyllysine. FAD is bound at residue Arg223. Lys226 and Lys232 each carry N6-acetyllysine; alternate. N6-succinyllysine; alternate occurs at positions 226 and 232. FAD is bound by residues Ser248, Val263–Thr266, Ser281–His286, and Asn300. Residue Lys301 is modified to N6-succinyllysine. An FAD-binding site is contributed by Asp318 to Leu319.

This sequence belongs to the ETF alpha-subunit/FixB family. As to quaternary structure, heterodimer composed of ETFA and ETFB. Identified in a complex that contains ETFA, ETFB and ETFRF1. Interaction with ETFRF1 promotes dissociation of the bound FAD and loss of electron transfer activity. Interacts with TASOR. FAD serves as cofactor. The N-terminus is blocked.

The protein resides in the mitochondrion matrix. Heterodimeric electron transfer flavoprotein that accepts electrons from several mitochondrial dehydrogenases, including acyl-CoA dehydrogenases, glutaryl-CoA and sarcosine dehydrogenase. It transfers the electrons to the main mitochondrial respiratory chain via ETF-ubiquinone oxidoreductase (ETF dehydrogenase). Required for normal mitochondrial fatty acid oxidation and normal amino acid metabolism. The polypeptide is Electron transfer flavoprotein subunit alpha, mitochondrial (ETFA) (Homo sapiens (Human)).